The sequence spans 266 residues: MKAVVLTLAVLFLTGSQARHFWQQDEPQSPWDRVKDLATVYVDAVKDGGRDYVAQFEASALGKQLNLKLLDNWDSLSGTVAKLREQIGPVTQEFWDNLEKETEALRQEMSKDLEEVKQKVQPYLDEFQKKWHEEVELYRQKVAPLGTELREGARQKLQELQEKLTPLGEELRDRARTHVDALRAHLAPYSDQLRERLATRLQALKEGGSASLAEYHAKASEHLSALSEKAKPALEDLRQGLLPVLESFKVSLLAAVDEAAKKLNTQ.

The first 18 residues, 1–18 (MKAVVLTLAVLFLTGSQA), serve as a signal peptide directing secretion. Tandem repeats lie at residues 67 to 88 (LKLLDNWDSLSGTVAKLREQIG) and 89 to 110 (PVTQEFWDNLEKETEALRQEMS). Residues 67 to 266 (LKLLDNWDSL…DEAAKKLNTQ (200 aa)) are 10 X approximate tandem repeats. At methionine 109 the chain carries Methionine sulfoxide. A 3; half-length repeat occupies 111 to 121 (KDLEEVKQKVQ). 5 tandem repeats follow at residues 122–143 (PYLDEFQKKWHEEVELYRQKVA), 144–165 (PLGTELREGARQKLQELQEKLT), 166–187 (PLGEELRDRARTHVDALRAHLA), 188–209 (PYSDQLRERLATRLQALKEGGS), and 210–231 (ASLAEYHAKASEHLSALSEKAK). One copy of the 9; half-length repeat lies at 232-242 (PALEDLRQGLL). Repeat 10 spans residues 243-266 (PVLESFKVSLLAAVDEAAKKLNTQ).

The protein belongs to the apolipoprotein A1/A4/E family. As to quaternary structure, homodimer. Interacts with APOA1BP and CLU. Component of a sperm activating protein complex (SPAP), consisting of APOA1, an immunoglobulin heavy chain, an immunoglobulin light chain and albumin. Interacts with NDRG1. Interacts with SCGB3A2. Interacts with NAXE and YJEFN3. Glycosylated. In terms of processing, palmitoylated. Post-translationally, phosphorylation sites are present in the extracellular medium.

It localises to the secreted. Its function is as follows. Participates in the reverse transport of cholesterol from tissues to the liver for excretion by promoting cholesterol efflux from tissues and by acting as a cofactor for the lecithin cholesterol acyltransferase (LCAT). As part of the SPAP complex, activates spermatozoa motility. This chain is Apolipoprotein A-I (APOA1), found in Mustela putorius furo (European domestic ferret).